Consider the following 281-residue polypeptide: Octanoyl-[GcvH]:protein N-octanoyltransferase (281 aa).

Positions 44–250 (GESAATMRSW…TLQQFAPKLT (207 aa)) constitute a BPL/LPL catalytic domain. The active-site Acyl-thioester intermediate is Cys149.

Belongs to the octanoyltransferase LipL family.

The enzyme catalyses N(6)-octanoyl-L-lysyl-[glycine-cleavage complex H protein] + L-lysyl-[lipoyl-carrier protein] = N(6)-octanoyl-L-lysyl-[lipoyl-carrier protein] + L-lysyl-[glycine-cleavage complex H protein]. The protein operates within protein modification; protein lipoylation via endogenous pathway; protein N(6)-(lipoyl)lysine from octanoyl-[acyl-carrier-protein]. Its function is as follows. Catalyzes the amidotransfer (transamidation) of the octanoyl moiety from octanoyl-GcvH to the lipoyl domain of the E2 subunit of lipoate-dependent enzymes. In Bacillus anthracis, this protein is Octanoyl-[GcvH]:protein N-octanoyltransferase.